An 82-amino-acid polypeptide reads, in one-letter code: RNA-binding protein Hfq (82 aa).

The Sm domain maps to 10–70 (DAFLNQVRKD…ISTVAPLRPI (61 aa)).

Belongs to the Hfq family. As to quaternary structure, homohexamer.

RNA chaperone that binds small regulatory RNA (sRNAs) and mRNAs to facilitate mRNA translational regulation in response to envelope stress, environmental stress and changes in metabolite concentrations. Also binds with high specificity to tRNAs. The chain is RNA-binding protein Hfq from Syntrophomonas wolfei subsp. wolfei (strain DSM 2245B / Goettingen).